Here is a 430-residue protein sequence, read N- to C-terminus: Adenylosuccinate synthetase (430 aa).

GTP-binding positions include 17–23 (GDEGKGK) and 45–47 (GHT). Residue Asp18 is the Proton acceptor of the active site. Residues Asp18 and Gly45 each coordinate Mg(2+). Residues 18-21 (DEGK), 43-46 (NAGH), Thr139, Arg153, Asn229, Thr244, and Arg308 contribute to the IMP site. His46 functions as the Proton donor in the catalytic mechanism. 304–310 (TVTGRRR) contacts substrate. GTP contacts are provided by residues Arg310, 336-338 (KLD), and 418-420 (GVG).

It belongs to the adenylosuccinate synthetase family. Homodimer. Requires Mg(2+) as cofactor.

Its subcellular location is the cytoplasm. It catalyses the reaction IMP + L-aspartate + GTP = N(6)-(1,2-dicarboxyethyl)-AMP + GDP + phosphate + 2 H(+). Its pathway is purine metabolism; AMP biosynthesis via de novo pathway; AMP from IMP: step 1/2. In terms of biological role, plays an important role in the de novo pathway and in the salvage pathway of purine nucleotide biosynthesis. Catalyzes the first committed step in the biosynthesis of AMP from IMP. The chain is Adenylosuccinate synthetase from Cryptococcus neoformans var. neoformans serotype D (strain B-3501A) (Filobasidiella neoformans).